The sequence spans 369 residues: Core histone macro-H2A.1 (369 aa).

In terms of domain architecture, Histone H2A spans 2–117; that stretch reads SSRGGKKKST…NIHPELLAKK (116 aa). An N6-lactoyllysine; alternate mark is found at lysine 7 and lysine 9. Lysine 18 is modified (N6-methyllysine). Position 116 is an N6-acetyllysine; alternate (lysine 116). Lysine 116 is covalently cross-linked (Glycyl lysine isopeptide (Lys-Gly) (interchain with G-Cter in ubiquitin); alternate). Lysine 117 is covalently cross-linked (Glycyl lysine isopeptide (Lys-Gly) (interchain with G-Cter in ubiquitin)). Lysine 123 carries the post-translational modification N6-acetyllysine; alternate. Lysine 123 carries the post-translational modification N6,N6-dimethyllysine; alternate. Lysine 123 participates in a covalent cross-link: Glycyl lysine isopeptide (Lys-Gly) (interchain with G-Cter in SUMO2); alternate. The tract at residues 128-180 is disordered; that stretch reads ITPPPAKKAKSPSQKKPVSKKAGGKKGARKSKKKQGEVSKAASADSTTEGTPA. Threonine 129 is modified (phosphothreonine). The segment covering 144–160 has biased composition (basic residues); sequence PVSKKAGGKKGARKSKK. A Glycyl lysine isopeptide (Lys-Gly) (interchain with G-Cter in SUMO2) cross-link involves residue lysine 167. Serine 170 and serine 173 each carry phosphoserine. Residue threonine 178 is modified to Phosphothreonine. In terms of domain architecture, Macro spans 184–367; that stretch reads TVLSTKSLFL…IYVQEMAKLD (184 aa). Residue lysine 189 forms a Glycyl lysine isopeptide (Lys-Gly) (interchain with G-Cter in SUMO2) linkage. A glycoprotein is bound by residues aspartate 203, isoleucine 204, valine 226, serine 275, glycine 312, serine 313, glycine 314, and asparagine 316. A Glycyl lysine isopeptide (Lys-Gly) (interchain with G-Cter in SUMO2) cross-link involves residue lysine 320.

Belongs to the histone H2A family. As to quaternary structure, the nucleosome is a histone octamer containing two molecules each of H2A, H2B, H3 and H4 assembled in one H3-H4 heterotetramer and two H2A-H2B heterodimers. Interacts with HDAC1 and HDAC2. Interacts with SPOP. Part of a complex consisting of MACROH2A1, CUL3 and SPOP. Interacts with PARP1. Monoubiquitinated at either Lys-116 or Lys-117. May also be polyubiquitinated. Ubiquitination is mediated by the CUL3/SPOP E3 complex and does not promote proteasomal degradation. Instead, it is required for enrichment in inactive X chromosome chromatin. In terms of tissue distribution, widely expressed.

The protein localises to the nucleus. Its subcellular location is the chromosome. Variant histone H2A which replaces conventional H2A in a subset of nucleosomes where it represses transcription. Nucleosomes wrap and compact DNA into chromatin, limiting DNA accessibility to the cellular machineries which require DNA as a template. Histones thereby play a central role in transcription regulation, DNA repair, DNA replication and chromosomal stability. DNA accessibility is regulated via a complex set of post-translational modifications of histones, also called histone code, and nucleosome remodeling. Involved in stable X chromosome inactivation. Inhibits the binding of transcription factors, including NF-kappa-B, and interferes with the activity of remodeling SWI/SNF complexes. Inhibits histone acetylation by EP300 and recruits class I HDACs, which induces a hypoacetylated state of chromatin. Its function is as follows. Isoform that specifically binds poly-ADP-ribose and O-acetyl-ADP-ribose and plays a key role in NAD(+) metabolism. Able to bind to the ends of poly-ADP-ribose chains created by PARP1 and cap them. This prevents PARP1 from further addition of ADP-ribose and thus limits the consumption of nuclear NAD(+), allowing the cell to maintain proper NAD(+) levels in both the nucleus and the mitochondria to promote proper mitochondrial respiration. Increases the expression of genes involved in redox metabolism, including SOD3. Functionally, in contrast to isoform 1, does not bind poly-ADP-ribose. Represses SOD3 gene expression. In Homo sapiens (Human), this protein is Core histone macro-H2A.1.